The chain runs to 223 residues: Sigma non-opioid intracellular receptor 1 (223 aa).

Residues 1–7 lie on the Lumenal side of the membrane; that stretch reads MAVLSSR. Residues 8 to 29 form a helical membrane-spanning segment; sequence AMRAALGLAVLAVVIQLLRTWL. Topologically, residues 30-223 are cytoplasmic; that stretch reads SSKSYLFNQK…HTYLSELGLS (194 aa). The segment at 98 to 105 is important for ligand-binding; it reads SLTEYILL. A C-terminal hydrophobic region region spans residues 176-223; that stretch reads FIPSTMGFALADTIFSTQDFCTLFYTFRIYARCLLLETHTYLSELGLS.

This sequence belongs to the ERG2 family. Homotrimer.

It is found in the nucleus inner membrane. Its subcellular location is the nucleus outer membrane. The protein resides in the nucleus envelope. It localises to the cytoplasmic vesicle. The protein localises to the endoplasmic reticulum membrane. It is found in the membrane. May function in lipid transport from the endoplasmic reticulum and be involved in a wide array of cellular functions probably through regulation of the biogenesis of lipid microdomains at the plasma membrane. May regulate calcium efflux at the endoplasmic reticulum. In Taricha granulosa (Roughskin newt), this protein is Sigma non-opioid intracellular receptor 1 (SIGMAR1).